The sequence spans 592 residues: RNA-binding protein 47 (592 aa).

Over residues 1 to 24 (MTAEDAAAAMSSDSAAGGAASAKA) the composition is skewed to low complexity. Residues 1–26 (MTAEDAAAAMSSDSAAGGAASAKAPE) are disordered. RRM domains follow at residues 73–151 (CEVF…CSVD), 153–235 (CRLF…WAEP), and 248–320 (KILY…LAKP). 2 positions are modified to asymmetric dimethylarginine; alternate: arginine 397 and arginine 408. 2 positions are modified to omega-N-methylarginine; alternate: arginine 397 and arginine 408.

Belongs to the RRM RBM47 family. In terms of assembly, homodimer. Interacts with A1CF. Interacts with APOBEC1; form an mRNA editing complex. Interacts with RBPMS.

Its subcellular location is the nucleus. It is found in the cytoplasm. Its function is as follows. Single-stranded RNA-binding protein that functions in a variety of RNA processes, including alternative splicing, RNA stabilization, and RNA editing. Functions as an enzyme-substrate adapter for the cytidine deaminase APOBEC1. With APOBEC1 forms an mRNA editing complex involved into cytidine to uridine editing of a variety of mRNA molecules. Through the binding of their 3'UTR, also stabilizes a variety of mRNAs and regulates the expression of genes such as the interferon alpha/beta receptor and interleukin-10. Also involved in the alternative splicing of several genes including TJP1. Binds the pre-mRNA (U)GCAUG consensus sequences in downstream intronic regions of alternative exons, regulating their exclusion and inclusion into mRNAs. Independently of its RNA-binding activity, could negatively regulate MAVS by promoting its lysosomal degradation. The polypeptide is RNA-binding protein 47 (Canis lupus familiaris (Dog)).